We begin with the raw amino-acid sequence, 259 residues long: GTP cyclohydrolase FolE2 (259 aa).

It belongs to the GTP cyclohydrolase IV family.

The catalysed reaction is GTP + H2O = 7,8-dihydroneopterin 3'-triphosphate + formate + H(+). The protein operates within cofactor biosynthesis; 7,8-dihydroneopterin triphosphate biosynthesis; 7,8-dihydroneopterin triphosphate from GTP: step 1/1. Functionally, converts GTP to 7,8-dihydroneopterin triphosphate. The chain is GTP cyclohydrolase FolE2 from Thermotoga petrophila (strain ATCC BAA-488 / DSM 13995 / JCM 10881 / RKU-1).